Here is a 911-residue protein sequence, read N- to C-terminus: Protein translocase subunit SecA (911 aa).

ATP-binding positions include glutamine 86, 104 to 108, and aspartate 512; that span reads GEGKT. Residues 869 to 888 are disordered; that stretch reads ALADDGQPQGAQPVRNVLPK. Residues cysteine 895, cysteine 897, cysteine 906, and histidine 907 each coordinate Zn(2+).

It belongs to the SecA family. As to quaternary structure, monomer and homodimer. Part of the essential Sec protein translocation apparatus which comprises SecA, SecYEG and auxiliary proteins SecDF-YajC and YidC. It depends on Zn(2+) as a cofactor.

The protein resides in the cell inner membrane. Its subcellular location is the cytoplasm. It carries out the reaction ATP + H2O + cellular proteinSide 1 = ADP + phosphate + cellular proteinSide 2.. Part of the Sec protein translocase complex. Interacts with the SecYEG preprotein conducting channel. Has a central role in coupling the hydrolysis of ATP to the transfer of proteins into and across the cell membrane, serving both as a receptor for the preprotein-SecB complex and as an ATP-driven molecular motor driving the stepwise translocation of polypeptide chains across the membrane. In Bordetella parapertussis (strain 12822 / ATCC BAA-587 / NCTC 13253), this protein is Protein translocase subunit SecA.